The chain runs to 196 residues: Recombination protein RecR (196 aa).

The C4-type zinc finger occupies 56-71 (CPVCGGLDSQQPCMIC). The region spanning 78-172 (PLICVVETVA…SVTRLAQGVP (95 aa)) is the Toprim domain.

It belongs to the RecR family.

Its function is as follows. May play a role in DNA repair. It seems to be involved in an RecBC-independent recombinational process of DNA repair. It may act with RecF and RecO. The sequence is that of Recombination protein RecR from Acidiphilium cryptum (strain JF-5).